Here is a 327-residue protein sequence, read N- to C-terminus: DNA-directed RNA polymerase subunit alpha (327 aa).

The segment at 1 to 233 is alpha N-terminal domain (alpha-NTD); that stretch reads MVREKVKVST…NLFIPFLHVE (233 aa). The segment at 267–327 is alpha C-terminal domain (alpha-CTD); that stretch reads LAFQYIFIDQ…KKILDILEKK (61 aa).

This sequence belongs to the RNA polymerase alpha chain family. In plastids the minimal PEP RNA polymerase catalytic core is composed of four subunits: alpha, beta, beta', and beta''. When a (nuclear-encoded) sigma factor is associated with the core the holoenzyme is formed, which can initiate transcription.

Its subcellular location is the plastid. The protein localises to the chloroplast. It carries out the reaction RNA(n) + a ribonucleoside 5'-triphosphate = RNA(n+1) + diphosphate. DNA-dependent RNA polymerase catalyzes the transcription of DNA into RNA using the four ribonucleoside triphosphates as substrates. The chain is DNA-directed RNA polymerase subunit alpha from Lepidium virginicum (Virginia pepperweed).